A 310-amino-acid polypeptide reads, in one-letter code: CCR4-NOT transcription complex subunit 7 (310 aa).

A divalent metal cation-binding residues include Asp-51, Glu-53, Asp-172, and Asp-245.

It belongs to the CAF1 family. Component of the CCR4-NOT complex at least composed of ccf-1, ccr-4 and let-711, which is required for germ cell development in hermaphrodites. Within the complex interacts with let-711. Highly expressed in the germline. In particular, highly expressed in germ cells that enter meiosis and progress through the pachytene stage.

The protein localises to the nucleus. The protein resides in the cytoplasm. It catalyses the reaction Exonucleolytic cleavage of poly(A) to 5'-AMP.. Functionally, catalytic component of the CCR4-NOT complex which is one of the major cellular mRNA deadenylases and is linked to various cellular processes including bulk mRNA degradation, miRNA-mediated repression, translational repression during translational initiation and general transcription regulation. Within the complex, plays a role in miRNA-mediated deadenylation in embryos. Within the complex promotes germ cell development and fertility in hermaphrodites. Additional complex functions may be a consequence of its influence on mRNA expression. The protein is CCR4-NOT transcription complex subunit 7 of Caenorhabditis elegans.